An 813-amino-acid chain; its full sequence is Phosphoribosylformylglycinamidine synthase subunit PurL (813 aa).

His56 is an active-site residue. Tyr59 and Lys103 together coordinate ATP. Glu105 contributes to the Mg(2+) binding site. Substrate is bound by residues 106 to 109 (SHNH) and Arg128. The active-site Proton acceptor is His107. Mg(2+) is bound at residue Asp129. Gln253 is a binding site for substrate. Asp281 is a Mg(2+) binding site. 325–327 (ESQ) is a substrate binding site. ATP-binding residues include Asn511 and Gly548. A Mg(2+)-binding site is contributed by Asn549. Ser551 contacts substrate.

This sequence belongs to the FGAMS family. As to quaternary structure, monomer. Part of the FGAM synthase complex composed of 1 PurL, 1 PurQ and 2 PurS subunits.

Its subcellular location is the cytoplasm. It carries out the reaction N(2)-formyl-N(1)-(5-phospho-beta-D-ribosyl)glycinamide + L-glutamine + ATP + H2O = 2-formamido-N(1)-(5-O-phospho-beta-D-ribosyl)acetamidine + L-glutamate + ADP + phosphate + H(+). The protein operates within purine metabolism; IMP biosynthesis via de novo pathway; 5-amino-1-(5-phospho-D-ribosyl)imidazole from N(2)-formyl-N(1)-(5-phospho-D-ribosyl)glycinamide: step 1/2. Part of the phosphoribosylformylglycinamidine synthase complex involved in the purines biosynthetic pathway. Catalyzes the ATP-dependent conversion of formylglycinamide ribonucleotide (FGAR) and glutamine to yield formylglycinamidine ribonucleotide (FGAM) and glutamate. The FGAM synthase complex is composed of three subunits. PurQ produces an ammonia molecule by converting glutamine to glutamate. PurL transfers the ammonia molecule to FGAR to form FGAM in an ATP-dependent manner. PurS interacts with PurQ and PurL and is thought to assist in the transfer of the ammonia molecule from PurQ to PurL. This is Phosphoribosylformylglycinamidine synthase subunit PurL from Corynebacterium jeikeium (strain K411).